A 174-amino-acid polypeptide reads, in one-letter code: Ribulose bisphosphate carboxylase small subunit, chloroplastic (174 aa).

Residues 1-45 constitute a chloroplast transit peptide; that stretch reads MAPTVMASSATSVAPFQGLKSTAGLPVSRRSNASSASVSNGGRIR.

Belongs to the RuBisCO small chain family. As to quaternary structure, heterohexadecamer of 8 large and 8 small subunits.

The protein resides in the plastid. It is found in the chloroplast. In terms of biological role, ruBisCO catalyzes two reactions: the carboxylation of D-ribulose 1,5-bisphosphate, the primary event in carbon dioxide fixation, as well as the oxidative fragmentation of the pentose substrate. Both reactions occur simultaneously and in competition at the same active site. Although the small subunit is not catalytic it is essential for maximal activity. The sequence is that of Ribulose bisphosphate carboxylase small subunit, chloroplastic from Hordeum vulgare (Barley).